The sequence spans 234 residues: MHQLVLLRHGESVWNKENLFTGWTDVELSPRGEEESRNAGLLLKEHGFVFDLAFTSLLKRAIKTLWIVLEQMDLMWIPEHKEWRLNERHYGALQGLNKAQTAQEYGDEQVKLWRRSYKVRPPALAEGDQRHPSFDPRYHSLSRDLLPDTECLQDTVERVLPFWQQQAVPALQQGKRILIAAHGNSLRGLIKYLDQIPDDDIVGLEIPTGSPLVYELDRDLKPVRRYYLETGKAG.

Substrate-binding positions include 8–15, 21–22, R60, 87–90, K98, 114–115, and 183–184; these read RHGESVWN, TG, ERHY, RR, and GN. Catalysis depends on H9, which acts as the Tele-phosphohistidine intermediate. E87 functions as the Proton donor/acceptor in the catalytic mechanism.

It belongs to the phosphoglycerate mutase family. BPG-dependent PGAM subfamily. Homodimer.

The enzyme catalyses (2R)-2-phosphoglycerate = (2R)-3-phosphoglycerate. It functions in the pathway carbohydrate degradation; glycolysis; pyruvate from D-glyceraldehyde 3-phosphate: step 3/5. In terms of biological role, catalyzes the interconversion of 2-phosphoglycerate and 3-phosphoglycerate. This Citrifermentans bemidjiense (strain ATCC BAA-1014 / DSM 16622 / JCM 12645 / Bem) (Geobacter bemidjiensis) protein is 2,3-bisphosphoglycerate-dependent phosphoglycerate mutase.